A 183-amino-acid polypeptide reads, in one-letter code: NADH-ubiquinone oxidoreductase chain 5 (183 aa).

4 helical membrane passes run 7-27 (FMCY…GDNS), 30-50 (LFLG…FWFT), 111-131 (AITL…AQIG), and 144-164 (TPVS…FMIA).

This sequence belongs to the complex I subunit 5 family.

Its subcellular location is the mitochondrion inner membrane. The enzyme catalyses a ubiquinone + NADH + 5 H(+)(in) = a ubiquinol + NAD(+) + 4 H(+)(out). In terms of biological role, core subunit of the mitochondrial membrane respiratory chain NADH dehydrogenase (Complex I) that is believed to belong to the minimal assembly required for catalysis. Complex I functions in the transfer of electrons from NADH to the respiratory chain. The immediate electron acceptor for the enzyme is believed to be ubiquinone. The polypeptide is NADH-ubiquinone oxidoreductase chain 5 (NDH5) (Pisum sativum (Garden pea)).